We begin with the raw amino-acid sequence, 213 residues long: MSDNNQCVIVGIAGASASGKSLIASTIYNELREKVGDHQIGVITEDCYYNDQSQLSMEERVKTNYDHPSALDHDLLCEHLEKLVRGEAVEVPEYSYTEHTRTSNTTPMTPKKVIILEGILLLTDPRLRDLMHATVFMDTPLDICLLRRVKRDVEERGRTMESVLKQYQQTVRPMFMQFIEPSKQYADIIVPRGGKNRIAIDVLKAHIAKLLKA.

Position 14 to 21 (14 to 21) interacts with ATP; sequence GASASGKS.

This sequence belongs to the uridine kinase family.

Its subcellular location is the cytoplasm. It catalyses the reaction uridine + ATP = UMP + ADP + H(+). It carries out the reaction cytidine + ATP = CMP + ADP + H(+). It functions in the pathway pyrimidine metabolism; CTP biosynthesis via salvage pathway; CTP from cytidine: step 1/3. Its pathway is pyrimidine metabolism; UMP biosynthesis via salvage pathway; UMP from uridine: step 1/1. In Vibrio campbellii (strain ATCC BAA-1116), this protein is Uridine kinase.